We begin with the raw amino-acid sequence, 568 residues long: Protein OCTOPUS-like (568 aa).

7 disordered regions span residues 1-27, 78-99, 168-203, 242-276, 360-428, 446-512, and 526-558; these read MNLS…RLST, LFKP…RPGF, EEAE…ELKP, QKQK…PRFS, PGGS…DKKS, DDEE…SKDG, and RSWK…SHGH. Low complexity predominate over residues 82–93; sequence SSSGTNNSNGNG. A compositionally biased stretch (acidic residues) spans 168 to 179; it reads EEAEIEEDEENG. Residues 180 to 193 are compositionally biased toward basic and acidic residues; it reads EKDPGEIVEEKSSE. Ser-260 is modified (phosphoserine). The span at 400-423 shows a compositional bias: polar residues; the sequence is SVSNSTTTIDSNSMETAENKGNQN. Positions 532 to 546 are enriched in gly residues; the sequence is GGSGGGGGGGGGGGW.

The protein belongs to the OCTOPUS family. In terms of processing, phosphorylation at Ser-260 amplifies the promotion of protophloem differentiation.

The protein localises to the cell membrane. It is found in the cytoplasm. In terms of biological role, potentiates primary root protophloem differentiation. Regulates roots architecture. The polypeptide is Protein OCTOPUS-like (Arabidopsis thaliana (Mouse-ear cress)).